Reading from the N-terminus, the 233-residue chain is NADP-dependent glyceraldehyde-3-phosphate dehydrogenase (233 aa).

7–8 provides a ligand contact to substrate; that stretch reads NY. K30 and S33 together coordinate NADP(+). Position 83–87 (83–87) interacts with NAD(+); that stretch reads GGDTG. E102 serves as the catalytic Proton acceptor. 135 to 137 is a substrate binding site; sequence RCT. C136 acts as the Nucleophile in catalysis. Residues E180 and E229 each coordinate NADP(+).

It belongs to the aldehyde dehydrogenase family.

It is found in the cytoplasm. The enzyme catalyses D-glyceraldehyde 3-phosphate + NADP(+) + H2O = (2R)-3-phosphoglycerate + NADPH + 2 H(+). Its function is as follows. Important as a means of generating NADPH for biosynthetic reactions. The protein is NADP-dependent glyceraldehyde-3-phosphate dehydrogenase (GapN) of Scenedesmus vacuolatus (Green alga).